We begin with the raw amino-acid sequence, 350 residues long: Mannonate dehydratase (350 aa).

The protein belongs to the mannonate dehydratase family. Fe(2+) serves as cofactor. It depends on Mn(2+) as a cofactor.

It catalyses the reaction D-mannonate = 2-dehydro-3-deoxy-D-gluconate + H2O. Its pathway is carbohydrate metabolism; pentose and glucuronate interconversion. Its function is as follows. Catalyzes the dehydration of D-mannonate. The sequence is that of Mannonate dehydratase from Clostridium perfringens (strain 13 / Type A).